Here is a 466-residue protein sequence, read N- to C-terminus: Asparagine--tRNA ligase (466 aa).

This sequence belongs to the class-II aminoacyl-tRNA synthetase family. In terms of assembly, homodimer.

The protein localises to the cytoplasm. It carries out the reaction tRNA(Asn) + L-asparagine + ATP = L-asparaginyl-tRNA(Asn) + AMP + diphosphate + H(+). In Shewanella sp. (strain MR-4), this protein is Asparagine--tRNA ligase.